A 236-amino-acid chain; its full sequence is MKGEALKIIEEVLAQGRTAMVEYEAKQVLKAYGLPVPEEKLAKTLDEALKYAEEIGYPVAMKLMSPQILHKSDAKVVMLNIKSPEELKKKWEEIHENARKYRPDAEIFGVLIAPMLKPGREVIIGVTEDPQFGHAIMFGLGGIFVEILKDVTFRIIPITEKDARKMITEIKAYPILAGARGEEPADIEAIVDMLLKVSKLVDDLKDYIKEMDLNPVFVYRKGEGAVVVDARIILKG.

The ATP-grasp domain maps to 26–62 (KQVLKAYGLPVPEEKLAKTLDEALKYAEEIGYPVAMK). Residue 52–63 (AEEIGYPVAMKL) participates in ATP binding.

It belongs to the acetate CoA ligase beta subunit family. Heterotetramer of two alpha and two beta subunits.

The catalysed reaction is acetate + ATP + CoA = acetyl-CoA + ADP + phosphate. In terms of biological role, catalyzes the reversible formation of acetate and ATP from acetyl-CoA by using ADP and phosphate. Can use other substrates such as phenylacetyl-CoA, indoleacetyl-CoA and isobutyryl-CoA, but not succinyl-CoA. Seems to be involved primarily in the degradation of aryl-CoA esters to the corresponding acids. Participates in the conversion of acetyl-CoA to acetate and in the degradation of branched-chain amino acids via branched-chain-acyl-CoA esters. This chain is Acetate--CoA ligase [ADP-forming] II subunit beta, found in Pyrococcus furiosus (strain ATCC 43587 / DSM 3638 / JCM 8422 / Vc1).